The following is a 340-amino-acid chain: Phenylalanine--tRNA ligase alpha subunit (340 aa).

Glutamate 255 serves as a coordination point for Mg(2+).

The protein belongs to the class-II aminoacyl-tRNA synthetase family. Phe-tRNA synthetase alpha subunit type 1 subfamily. As to quaternary structure, tetramer of two alpha and two beta subunits. Mg(2+) is required as a cofactor.

Its subcellular location is the cytoplasm. It carries out the reaction tRNA(Phe) + L-phenylalanine + ATP = L-phenylalanyl-tRNA(Phe) + AMP + diphosphate + H(+). The chain is Phenylalanine--tRNA ligase alpha subunit from Desulfitobacterium hafniense (strain Y51).